Consider the following 178-residue polypeptide: Large ribosomal subunit protein uL6 (178 aa).

It belongs to the universal ribosomal protein uL6 family. Part of the 50S ribosomal subunit.

Its function is as follows. This protein binds to the 23S rRNA, and is important in its secondary structure. It is located near the subunit interface in the base of the L7/L12 stalk, and near the tRNA binding site of the peptidyltransferase center. This Shouchella clausii (strain KSM-K16) (Alkalihalobacillus clausii) protein is Large ribosomal subunit protein uL6.